We begin with the raw amino-acid sequence, 501 residues long: MTDTQNKNYIIALDQGTTSSRAIIFDRDANVVSTAQSEFVQHYPQAGWVEHDPMEIFATQTACMTKALAQADLHHNQIAAIGITNQRETTVIWERDTGRPIYNAIVWQCRRSTEICQQLKRDGLEEYIKDTTGLVIDPYFSGSKVKWILDNVEGSRERARKGELMFGTIDTWLIWKFTGGKVHVTDYTNASRTMLFNIHTLEWDQRMLDVLDIPREMLPEVKASSEVYGHSKSGIPIAGIAGDQQAALFGQMCVEPGQAKNTYGTGCFLLMNTGKKAVKSAHGMLTTIGCGPRGEVAYALEGAVFNGGSTVQWLRDELKLINDALDTEYFAGKVKDSNGVYLVPAFTGLGAPYWDPYARGALFGLTRGVKVDHIIRAALESIAYQTRDVLDAMQQDSGERLKSLRVDGGAVANNFLMQFQADILGTHVERPQMRETTALGAAFLAGLAIGFWSSLDELRNKAVIERVFEPSCEEAHREKLYAGWQKAVARTRDWEPHENEE.

Residue Thr-17 coordinates ADP. ATP contacts are provided by Thr-17, Thr-18, and Ser-19. Residue Thr-17 participates in sn-glycerol 3-phosphate binding. Arg-21 lines the ADP pocket. Residues Arg-87, Glu-88, Tyr-139, and Asp-243 each contribute to the sn-glycerol 3-phosphate site. Arg-87, Glu-88, Tyr-139, Asp-243, and Gln-244 together coordinate glycerol. ADP is bound by residues Thr-265 and Gly-308. Residues Thr-265, Gly-308, Gln-312, and Gly-409 each contribute to the ATP site. ADP contacts are provided by Gly-409 and Asn-413.

The protein belongs to the FGGY kinase family.

The catalysed reaction is glycerol + ATP = sn-glycerol 3-phosphate + ADP + H(+). It participates in polyol metabolism; glycerol degradation via glycerol kinase pathway; sn-glycerol 3-phosphate from glycerol: step 1/1. Inhibited by fructose 1,6-bisphosphate (FBP). Functionally, key enzyme in the regulation of glycerol uptake and metabolism. Catalyzes the phosphorylation of glycerol to yield sn-glycerol 3-phosphate. This chain is Glycerol kinase, found in Pseudomonas syringae pv. syringae (strain B728a).